Here is a 228-residue protein sequence, read N- to C-terminus: L-ornithine N5-acetyltransferase NATA1 (228 aa).

The interval 1 to 21 (MAPPTAAPEPNTVPETSPTGH) is disordered. Residues 77–227 (VFLLEISPSP…DALQAIDKLN (151 aa)) enclose the N-acetyltransferase domain. Residues 153 to 155 (IFM), 161 to 166 (RKGFGK), 192 to 195 (NVNA), and Y199 each bind acetyl-CoA.

It belongs to the acetyltransferase family.

In terms of biological role, acetyltransferase that converts ornithine to N5-acetylornithine, which is likely used in plant defense. This Arabidopsis thaliana (Mouse-ear cress) protein is L-ornithine N5-acetyltransferase NATA1 (NATA1).